Reading from the N-terminus, the 127-residue chain is Protein B20 (127 aa).

The interval 86–127 is disordered; the sequence is DRTGMNSESDSESDNISIKTEYENEYEFYDETQDQSTQHNDL. A compositionally biased stretch (acidic residues) spans 108–118; the sequence is ENEYEFYDETQ.

The protein is Protein B20 of Homo sapiens (Human).